Consider the following 337-residue polypeptide: Anthranilate phosphoribosyltransferase (337 aa).

Residues Gly81, 84–85, Ser89, 91–94, 109–117, and Ala121 contribute to the 5-phospho-alpha-D-ribose 1-diphosphate site; these read GD, NVST, and KHGNRAASS. Residue Gly81 coordinates anthranilate. Ser93 serves as a coordination point for Mg(2+). An anthranilate-binding site is contributed by Asn112. Arg167 lines the anthranilate pocket. Positions 226 and 227 each coordinate Mg(2+).

This sequence belongs to the anthranilate phosphoribosyltransferase family. As to quaternary structure, homodimer. Mg(2+) is required as a cofactor.

The enzyme catalyses N-(5-phospho-beta-D-ribosyl)anthranilate + diphosphate = 5-phospho-alpha-D-ribose 1-diphosphate + anthranilate. Its pathway is amino-acid biosynthesis; L-tryptophan biosynthesis; L-tryptophan from chorismate: step 2/5. Functionally, catalyzes the transfer of the phosphoribosyl group of 5-phosphorylribose-1-pyrophosphate (PRPP) to anthranilate to yield N-(5'-phosphoribosyl)-anthranilate (PRA). The polypeptide is Anthranilate phosphoribosyltransferase (Methylobacterium sp. (strain 4-46)).